The primary structure comprises 56 residues: Ovomucoid (56 aa).

In terms of domain architecture, Kazal-like spans 6–56; that stretch reads VDCSEYPKPACTLEYRPLCGSDSKTYANKCNFCNAVVESNGTLTLSHFGKC. Cystine bridges form between C8–C38, C16–C35, and C24–C56. Residue N45 is glycosylated (N-linked (GlcNAc...) asparagine).

Its subcellular location is the secreted. This chain is Ovomucoid, found in Oreortyx pictus (Mountain quail).